Here is a 305-residue protein sequence, read N- to C-terminus: Acyl transferase (305 aa).

Residues Ser-116, Asp-213, and His-243 each act as charge relay system in the active site.

It belongs to the LuxD family.

The protein operates within lipid metabolism; fatty acid reduction for biolumincescence. Acyl transferase is part of the fatty acid reductase system required for aldehyde biosynthesis; it produces fatty acids for the luminescent reaction. The chain is Acyl transferase from Shewanella woodyi (strain ATCC 51908 / MS32).